Consider the following 617-residue polypeptide: Hemagglutinin glycoprotein (617 aa).

The Intravirion portion of the chain corresponds to 1–37; that stretch reads MSPQRDRINAFYKDNPHPKGSRIVINREHLMIDRPYV. A stalk region spans residues 1-154; the sequence is MSPQRDRINA…RIKLDYDQYC (154 aa). Residues 38 to 58 traverse the membrane as a helical segment; that stretch reads LLAVLFVMFLSLIGLLAIAGI. Topologically, residues 59–617 are virion surface; the sequence is RLHRAAIYTA…VTREDGTNRR (559 aa). N-linked (GlcNAc...) asparagine; by host glycosylation occurs at N168. The involved in cell-to-cell fusion dependent on CADM1, CADM2, and NECTIN4 stretch occupies residues 171-175; it reads LLEAR. N187, N200, N215, and N238 each carry an N-linked (GlcNAc...) asparagine; by host glycan. 5 cysteine pairs are disulfide-bonded: C188/C606, C287/C300, C381/C494, C386/C394, and C570/C579. Residue N416 is glycosylated (N-linked (GlcNAc...) asparagine; by host). Residues 458 to 543 are interaction with host NECTIN4 receptor; the sequence is PMKNLALGVI…VEHAVVYYVY (86 aa).

This sequence belongs to the paramyxoviruses hemagglutinin-neuraminidase family. Non-sialidase subfamily. In terms of assembly, homodimer; disulfide-linked. Further forms homotetramer (dimer of dimers). Interacts (via C-terminus) with human NECTIN4 (via N-terminus); this interaction allows attachment to the respiratory epithelium and viral entry. Interacts (via C-terminus) with human SLAMF1/CD150 (via N-terminus); this interaction allows attachment and viral entry into the CD150-expressing immune cells.

The protein resides in the virion membrane. Its subcellular location is the host cell membrane. Attaches the virus to the human SLAMF1/CD150 receptor for entry into host dendritic cells, macrophages, activated memory T cells and naive or memory B cells, thereby explaining the long immunosuppression that follows infection. In the respiratory airways, binds to the NECTIN4 receptor for entry into the host cell. During viral entry or virus-mediated fusion between infected cells and neighboring susceptible cells, the head domain of the H protein initially binds to its receptor and then the stalk region of the H protein transmits the fusion-triggering signal to the F protein. Unilateral receptor binding to only one of the covalently linked dimer pairs in the H tetramer is sufficient for F triggering. In case of neuropathogenic strains, host CADM1 (isoform 5) and CADM2 (isoform 5) can interact with measles hemagglutinin to trigger hyperfusogenic F-mediated membrane fusion and presumably transsynaptic cell-to-cell transmission of the virus. This Homo sapiens (Human) protein is Hemagglutinin glycoprotein (H).